Consider the following 45-residue polypeptide: MITAIIIAKLPEAYTVFRPLVDILPVIPIFFLLLAFVWQAAIGFR.

A propeptide spanning residues 1-8 (MITAIIIA) is cleaved from the precursor. The chain crosses the membrane as a helical span at residues 23–43 (ILPVIPIFFLLLAFVWQAAIG).

This sequence belongs to the PsbK family. As to quaternary structure, PSII is composed of 1 copy each of membrane proteins PsbA, PsbB, PsbC, PsbD, PsbE, PsbF, PsbH, PsbI, PsbJ, PsbK, PsbL, PsbM, PsbT, PsbX, PsbY, PsbZ, Psb30/Ycf12, at least 3 peripheral proteins of the oxygen-evolving complex and a large number of cofactors. It forms dimeric complexes.

It localises to the plastid. It is found in the chloroplast thylakoid membrane. Functionally, one of the components of the core complex of photosystem II (PSII). PSII is a light-driven water:plastoquinone oxidoreductase that uses light energy to abstract electrons from H(2)O, generating O(2) and a proton gradient subsequently used for ATP formation. It consists of a core antenna complex that captures photons, and an electron transfer chain that converts photonic excitation into a charge separation. The sequence is that of Photosystem II reaction center protein K from Gracilaria tenuistipitata var. liui (Red alga).